Reading from the N-terminus, the 718-residue chain is Auxin response factor 2 (718 aa).

Residues Met-1–Val-24 form a disordered region. Residues Thr-8–Gly-18 are compositionally biased toward acidic residues. Residues Phe-147–Ala-249 constitute a DNA-binding region (TF-B3).

Belongs to the ARF family. Homo and heterodimers. In terms of tissue distribution, expressed in roots, culms, leaves and young panicles.

It is found in the nucleus. Auxin response factors (ARFs) are transcriptional factors that bind specifically to the DNA sequence 5'-TGTCTC-3' found in the auxin-responsive promoter elements (AuxREs). The sequence is that of Auxin response factor 2 (ARF2) from Oryza sativa subsp. japonica (Rice).